The primary structure comprises 700 residues: Elongation factor G (700 aa).

The tr-type G domain occupies 8–290 (ERYRNIGISA…AVVEYLPAPT (283 aa)). Residues 17 to 24 (AHIDAGKT), 88 to 92 (DTPGH), and 142 to 145 (NKMD) contribute to the GTP site.

The protein belongs to the TRAFAC class translation factor GTPase superfamily. Classic translation factor GTPase family. EF-G/EF-2 subfamily.

It is found in the cytoplasm. Functionally, catalyzes the GTP-dependent ribosomal translocation step during translation elongation. During this step, the ribosome changes from the pre-translocational (PRE) to the post-translocational (POST) state as the newly formed A-site-bound peptidyl-tRNA and P-site-bound deacylated tRNA move to the P and E sites, respectively. Catalyzes the coordinated movement of the two tRNA molecules, the mRNA and conformational changes in the ribosome. This is Elongation factor G from Haemophilus influenzae (strain PittEE).